A 617-amino-acid polypeptide reads, in one-letter code: tRNA 5-methylaminomethyl-2-thiouridine biosynthesis bifunctional protein MnmC (617 aa).

Residues 1-226 form a tRNA (mnm(5)s(2)U34)-methyltransferase region; that stretch reads MLDWQNGQLY…KREMLQGDLP (226 aa). An FAD-dependent cmnm(5)s(2)U34 oxidoreductase region spans residues 241–617; that stretch reads IGGGIAGCAA…SPAIPVSIKG (377 aa).

In the N-terminal section; belongs to the methyltransferase superfamily. tRNA (mnm(5)s(2)U34)-methyltransferase family. The protein in the C-terminal section; belongs to the DAO family. FAD is required as a cofactor.

The protein localises to the cytoplasm. It carries out the reaction 5-aminomethyl-2-thiouridine(34) in tRNA + S-adenosyl-L-methionine = 5-methylaminomethyl-2-thiouridine(34) in tRNA + S-adenosyl-L-homocysteine + H(+). In terms of biological role, catalyzes the last two steps in the biosynthesis of 5-methylaminomethyl-2-thiouridine (mnm(5)s(2)U) at the wobble position (U34) in tRNA. Catalyzes the FAD-dependent demodification of cmnm(5)s(2)U34 to nm(5)s(2)U34, followed by the transfer of a methyl group from S-adenosyl-L-methionine to nm(5)s(2)U34, to form mnm(5)s(2)U34. The polypeptide is tRNA 5-methylaminomethyl-2-thiouridine biosynthesis bifunctional protein MnmC (Nitrosospira multiformis (strain ATCC 25196 / NCIMB 11849 / C 71)).